The sequence spans 142 residues: Large ribosomal subunit protein uL13 (142 aa).

Belongs to the universal ribosomal protein uL13 family. In terms of assembly, part of the 50S ribosomal subunit.

This protein is one of the early assembly proteins of the 50S ribosomal subunit, although it is not seen to bind rRNA by itself. It is important during the early stages of 50S assembly. The sequence is that of Large ribosomal subunit protein uL13 from Polaromonas sp. (strain JS666 / ATCC BAA-500).